The following is a 507-amino-acid chain: L-amino-acid oxidase (507 aa).

The N-terminal stretch at 1-19 is a signal peptide; sequence MNVLFIFSLLFLAALESCA. The cysteines at positions 29 and 192 are disulfide-linked. Residues 62–63, 82–83, Arg-90, and 106–109 contribute to the FAD site; these read MA, EA, and GPMR. Position 109 (Arg-109) interacts with substrate. Asn-191 and Asn-213 each carry an N-linked (GlcNAc...) asparagine glycan. Residue Val-280 participates in FAD binding. Cys-348 and Cys-429 are joined by a disulfide. Residue Asn-378 is glycosylated (N-linked (GlcNAc...) asparagine). Residue Tyr-389 coordinates substrate. Residues Glu-473 and 480 to 485 each bind FAD; that span reads GWIDST.

This sequence belongs to the flavin monoamine oxidase family. FIG1 subfamily. As to quaternary structure, homodimer; non-covalently linked. FAD serves as cofactor. Expressed by the venom gland.

It localises to the secreted. The enzyme catalyses an L-alpha-amino acid + O2 + H2O = a 2-oxocarboxylate + H2O2 + NH4(+). It carries out the reaction L-leucine + O2 + H2O = 4-methyl-2-oxopentanoate + H2O2 + NH4(+). Its function is as follows. Catalyzes an oxidative deamination of predominantly hydrophobic and aromatic L-amino acids, thus producing hydrogen peroxide that may contribute to the diverse toxic effects of this enzyme. Shows activity on L-Leu. Exhibits diverse biological activities, such as hemorrhage, hemolysis, edema, apoptosis of vascular endothelial cells or tumor cell lines, antibacterial and antiparasitic activities. This protein induces platelet aggregation by both hydrogen peroxide production and binding to platelet membrane proteins (that would enhance the sensitivity of platelets to hydrogen peroxide). Effects of snake L-amino oxidases on platelets are controversial, since they either induce aggregation or inhibit agonist-induced aggregation. These different effects are probably due to different experimental conditions. In Naja atra (Chinese cobra), this protein is L-amino-acid oxidase.